The primary structure comprises 3425 residues: Genome polyprotein (3425 aa).

The segment at 3–16 (NKKPGRPGSGRVVN) is interaction with host EXOC1. The tract at residues 38–73 (VLRGAGPIRFVLALLTFFKFTALRPTIGMLKRWKLV) is hydrophobic; homodimerization of capsid protein C. Residues 105 to 120 (GGSCSWIIMLLPIVAG) constitute a propeptide, ER anchor for the capsid protein C, removed in mature form by serine protease NS3. A helical membrane pass occupies residues 105–125 (GGSCSWIIMLLPIVAGLKLGN). Asn135 carries an N-linked (GlcNAc...) asparagine; by host glycan. Helical transmembrane passes span 247 to 267 (WALRNPGYALAAIFIGWNLGT) and 273 to 293 (IIFTIMLMLIAPAYSFSCLGM). Disulfide bonds link Cys290–Cys317, Cys347–Cys403, Cys361–Cys392, Cys379–Cys408, Cys477–Cys575, and Cys592–Cys623. Positions 385–398 (DRGWGNGCGLFGKG) are fusion peptide. The next 2 membrane-spanning stretches (helical) occupy residues 740–760 (LFGGMSWTTQGMLGALLLWMG) and 768–788 (ISMTFLAVGGILVFLAVNVNA). Cysteines 792 and 803 form a disulfide. N-linked (GlcNAc...) asparagine; by host glycans are attached at residues Asn918, Asn963, and Asn995. Cystine bridges form between Cys967/Cys1011, Cys1068/Cys1117, Cys1079/Cys1100, and Cys1101/Cys1104. The next 7 membrane-spanning stretches (helical) occupy residues 1138-1158 (VMAFQGGGMEPMQLGMLVMIV), 1169-1189 (TAPIAWSALLLLMALVLFGGI), 1214-1234 (IVHLAMVAAFNIQPGLLIGFL), 1290-1310 (FALPLVSLLAPGLRIVGIDVV), 1337-1357 (MLLGVACATAGIASPLVFAGL), 1369-1389 (WPVSEALTAVGLTFALAGGIA), and 1395-1415 (SMAIPLAVGGIMLVVAVVTGF). The segment at 1421 to 1460 (LEKASDISWSEEARVTGASQRFDVEIDQDGNMRLLNDPGV) is interacts with and activates NS3 protease. Residues 1499-1676 (GGVIWDVPAP…EKKEEEVPQV (178 aa)) form the Peptidase S7 domain. Active-site charge relay system; for serine protease NS3 activity residues include His1549, Asp1573, and Ser1633. The Helicase ATP-binding domain maps to 1679–1835 (ENMLRKRQLT…DSNSPITDIE (157 aa)). Positions 1683–1686 (RKRQ) are important for RNA-binding. 1692–1699 (LHPGSGKT) contacts ATP. The DEAH box signature appears at 1783–1786 (DEAH). Residues 1845-2011 (SGYEWITDFQ…GLVAQLYGPE (167 aa)) form the Helicase C-terminal domain. A regulates the ATPase activity of NS3 helicase region spans residues 2162–2166 (EELPE). Transmembrane regions (helical) follow at residues 2169 to 2189 (ETFLLVFMMTVASMGVFLFFV), 2194 to 2214 (LGKTGLGAMVMATVTVLLWIA), 2216 to 2236 (VPAQKIAGVLLVSLLLMIVLI), 2252 to 2272 (VFMIVVLLVVGAVASNEMGWL), 2306 to 2326 (AWAAYAGATTFLTPLLKHLII), 2334 to 2354 (LMAMTAQAGALFGLGKGMPFV), 2371 to 2391 (FTMTTTVSAVMMVILHYAFLV), and 2441 to 2461 (CVLVGIALVAVFLTPNTLTLT). Residues 2521-2786 (GGGTGRTLGE…DVDLGSGTRA (266 aa)) form the mRNA cap 0-1 NS5-type MT domain. Residue Ser2576 participates in S-adenosyl-L-methionine binding. The residue at position 2576 (Ser2576) is a Phosphoserine. The active-site For 2'-O-MTase activity is Lys2581. 5 residues coordinate S-adenosyl-L-methionine: Gly2606, Trp2607, Thr2624, Lys2625, and Val2652. Asp2666 (for 2'-O-MTase activity) is an active-site residue. Ile2667 provides a ligand contact to S-adenosyl-L-methionine. Catalysis depends on for 2'-O-MTase activity residues Lys2702 and Glu2738. Residue Tyr2740 coordinates S-adenosyl-L-methionine. Glu2960, His2964, Cys2969, and Cys2972 together coordinate Zn(2+). The region spanning 3050–3202 (GLMYADDTAG…KPADDRFATA (153 aa)) is the RdRp catalytic domain. Residues His3237, Cys3253, and Cys3372 each coordinate Zn(2+). Positions 3423–3425 (GVL) match the PDZ-binding motif.

This sequence in the N-terminal section; belongs to the class I-like SAM-binding methyltransferase superfamily. mRNA cap 0-1 NS5-type methyltransferase family. In terms of assembly, homodimer. As to quaternary structure, forms heterodimers with envelope protein E in the endoplasmic reticulum and Golgi. Homodimer; in the endoplasmic reticulum and Golgi. Interacts with protein prM. Interacts with non-structural protein 1. In terms of assembly, homodimer; Homohexamer when secreted. Interacts with envelope protein E. NS1 interacts with NS4B. Interacts with host MAVS (via C-terminus); this interaction blocks the interaction of MAVS with RIGI or IFIH1/MDA5. As to quaternary structure, interacts (via N-terminus) with serine protease NS3. Forms a heterodimer with serine protease NS3. May form homooligomers. In terms of assembly, forms a heterodimer with NS2B. Interacts with non-structural protein 2A (via N-terminus). Interacts with NS4B. Interacts with unphosphorylated RNA-directed RNA polymerase NS5; this interaction stimulates RNA-directed RNA polymerase NS5 guanylyltransferase activity. As to quaternary structure, interacts with serine protease NS3. Homodimer. In terms of processing, specific enzymatic cleavages in vivo yield mature proteins. Cleavages in the lumen of endoplasmic reticulum are performed by host signal peptidase, whereas cleavages in the cytoplasmic side are performed by serine protease NS3. Signal cleavage at the 2K-4B site requires a prior NS3 protease-mediated cleavage at the 4A-2K site. Both NS2A and NS2B proteins are required in cis for NS2A/2B proteolytic processing. Cleaved in post-Golgi vesicles by a host furin, releasing the mature small envelope protein M, and peptide pr. This cleavage is incomplete as up to 30% of viral particles still carry uncleaved prM. Post-translationally, N-glycosylated. In terms of processing, N-glycosylated. The excreted form is glycosylated and this is required for efficient secretion of the protein from infected cells. Phosphorylated on serines residues. This phosphorylation may trigger NS5 nuclear localization.

Its subcellular location is the virion. It localises to the host nucleus. The protein resides in the host cytoplasm. The protein localises to the host perinuclear region. It is found in the secreted. Its subcellular location is the virion membrane. It localises to the host endoplasmic reticulum membrane. The enzyme catalyses Selective hydrolysis of -Xaa-Xaa-|-Yaa- bonds in which each of the Xaa can be either Arg or Lys and Yaa can be either Ser or Ala.. It catalyses the reaction RNA(n) + a ribonucleoside 5'-triphosphate = RNA(n+1) + diphosphate. It carries out the reaction a ribonucleoside 5'-triphosphate + H2O = a ribonucleoside 5'-diphosphate + phosphate + H(+). The catalysed reaction is ATP + H2O = ADP + phosphate + H(+). The enzyme catalyses a 5'-end (5'-triphosphoguanosine)-ribonucleoside in mRNA + S-adenosyl-L-methionine = a 5'-end (N(7)-methyl 5'-triphosphoguanosine)-ribonucleoside in mRNA + S-adenosyl-L-homocysteine. It catalyses the reaction a 5'-end (N(7)-methyl 5'-triphosphoguanosine)-ribonucleoside in mRNA + S-adenosyl-L-methionine = a 5'-end (N(7)-methyl 5'-triphosphoguanosine)-(2'-O-methyl-ribonucleoside) in mRNA + S-adenosyl-L-homocysteine + H(+). Capsid protein self-assembles to form an icosahedral capsid about 40 nm in diameter. Plays a role in virus budding by binding to the cell membrane and gathering the viral RNA into a nucleocapsid that forms the core of a mature virus particle. In terms of biological role, prevents premature fusion activity of envelope proteins in trans-Golgi by binding to envelope protein E at pH6.0. After virion release in extracellular space, gets dissociated from E dimers. Functionally, acts as a chaperone for envelope protein E during intracellular virion assembly by masking and inactivating envelope protein E fusion peptide. prM is the only viral peptide matured by host furin in the trans-Golgi network probably to avoid catastrophic activation of the viral fusion activity in acidic Golgi compartment prior to virion release. prM-E cleavage is inefficient, and many virions are only partially matured. These uncleaved prM would play a role in immune evasion. Its function is as follows. May play a role in virus budding. Exerts cytotoxic effects by activating a mitochondrial apoptotic pathway through M ectodomain. May display a viroporin activity. Binds to host cell surface receptor and mediates fusion between viral and cellular membranes. Envelope protein is synthesized in the endoplasmic reticulum in the form of heterodimer with protein prM. They play a role in virion budding in the ER, and the newly formed immature particle is covered with 60 spikes composed of heterodimer between precursor prM and envelope protein E. The virion is transported to the Golgi apparatus where the low pH causes dissociation of PrM-E heterodimers and formation of E homodimers. In terms of biological role, involved in immune evasion, pathogenesis and viral replication. Interacts with host MAVS and blocks MAVS binding to RIGI or IFIH1/MDA5, thereby leading to evasion of the innate immune response. Once cleaved off the polyprotein, is targeted to three destinations: the viral replication cycle, the plasma membrane and the extracellular compartment. Essential for viral replication. Required for formation of the replication complex and recruitment of other non-structural proteins to the ER-derived membrane structures. Excreted as a hexameric lipoparticle that plays a role against host immune response. Functionally, component of the viral RNA replication complex that functions in virion assembly. Its function is as follows. Required cofactor for the serine protease function of NS3. May have membrane-destabilizing activity and form viroporins. Displays three enzymatic activities: serine protease, NTPase and RNA helicase. NS3 serine protease, in association with NS2B, performs its autocleavage and cleaves the polyprotein at dibasic sites in the cytoplasm: C-prM, NS2A-NS2B, NS2B-NS3, NS3-NS4A, NS4A-2K and NS4B-NS5. NS3 RNA helicase binds RNA and unwinds dsRNA in the 3' to 5' direction. In terms of biological role, regulates the ATPase activity of the NS3 helicase activity. NS4A allows NS3 helicase to conserve energy during unwinding. Functionally, functions as a signal peptide for NS4B. Its function is as follows. Induces the formation of ER-derived membrane vesicles where the viral replication takes place. Replicates the viral (+) and (-) RNA genome, and performs the capping of genomes in the cytoplasm. NS5 methylates viral RNA cap at guanine N-7 and ribose 2'-O positions. This Anas (ducks) protein is Genome polyprotein.